Here is a 255-residue protein sequence, read N- to C-terminus: 5'-nucleotidase SurE (255 aa).

Residues D8, D9, S39, and N91 each coordinate a divalent metal cation.

The protein belongs to the SurE nucleotidase family. It depends on a divalent metal cation as a cofactor.

The protein localises to the cytoplasm. The catalysed reaction is a ribonucleoside 5'-phosphate + H2O = a ribonucleoside + phosphate. Functionally, nucleotidase that shows phosphatase activity on nucleoside 5'-monophosphates. The polypeptide is 5'-nucleotidase SurE (Nitrosospira multiformis (strain ATCC 25196 / NCIMB 11849 / C 71)).